The following is a 589-amino-acid chain: Probable arginine--tRNA ligase, cytoplasmic (589 aa).

Residues 121–123, H132, Y332, D336, and Q360 contribute to the L-arginine site; that span reads SPN. The 'HIGH' region motif lies at 121 to 132; that stretch reads SPNIAKPFHAGH. The tract at residues 469 to 483 is interaction with tRNA; sequence DTGPYLQYAHARLCS.

This sequence belongs to the class-I aminoacyl-tRNA synthetase family.

Its subcellular location is the cytoplasm. It is found in the cytosol. It catalyses the reaction tRNA(Arg) + L-arginine + ATP = L-arginyl-tRNA(Arg) + AMP + diphosphate. In terms of biological role, forms part of a macromolecular complex that catalyzes the attachment of specific amino acids to cognate tRNAs during protein synthesis. This is Probable arginine--tRNA ligase, cytoplasmic (argS1) from Dictyostelium discoideum (Social amoeba).